Consider the following 460-residue polypeptide: Cytochrome P450 CYP71D312 (460 aa).

A heme-binding site is contributed by cysteine 398.

The protein belongs to the cytochrome P450 family. Heme serves as cofactor.

Its function is as follows. Probable heme-thiolate monooxygenase. This chain is Cytochrome P450 CYP71D312, found in Panax ginseng (Korean ginseng).